Consider the following 91-residue polypeptide: Transcription factor ILI3 (91 aa).

Residues Ser3 to Leu58 form the bHLH domain.

Belongs to the bHLH protein family.

Its function is as follows. Atypical and probable non DNA-binding bHLH transcription that integrates multiple signaling pathways to regulate cell elongation and plant development. The protein is Transcription factor ILI3 (ILI3) of Oryza sativa subsp. indica (Rice).